Reading from the N-terminus, the 241-residue chain is MQHTSRDHLSYNFKTTAPHPPVEWKISDGLVEYPEALRYMQKRVENIYAKIAHEQVWLLEHPSLYTAGTSANKNDLLIPHVFPVYEAGRGGEFTYHGPGQRIAYIMLDLKRRKQDIRAFISALEQWIIQTLAQFNIKGERREDRIGVWVVRPDRPSIISGIPAEDKIAAIGIRVRKWISFHGISINVDTDLTHYSGIVPCGITNHGVTSLLDLGLPITIHDVDNALKKAFEQIFGPTIDVS.

The BPL/LPL catalytic domain maps to 50-238 (KIAHEQVWLL…AFEQIFGPTI (189 aa)). Substrate is bound by residues 89-96 (RGGEFTYH), 169-171 (AIG), and 182-184 (GIS). Cys-200 serves as the catalytic Acyl-thioester intermediate.

This sequence belongs to the LipB family.

It is found in the cytoplasm. It carries out the reaction octanoyl-[ACP] + L-lysyl-[protein] = N(6)-octanoyl-L-lysyl-[protein] + holo-[ACP] + H(+). Its pathway is protein modification; protein lipoylation via endogenous pathway; protein N(6)-(lipoyl)lysine from octanoyl-[acyl-carrier-protein]: step 1/2. Its function is as follows. Catalyzes the transfer of endogenously produced octanoic acid from octanoyl-acyl-carrier-protein onto the lipoyl domains of lipoate-dependent enzymes. Lipoyl-ACP can also act as a substrate although octanoyl-ACP is likely to be the physiological substrate. The protein is Octanoyltransferase of Bartonella bacilliformis (strain ATCC 35685 / KC583 / Herrer 020/F12,63).